Reading from the N-terminus, the 358-residue chain is 3-dehydroquinate synthase (358 aa).

NAD(+) contacts are provided by residues 70–75, 104–108, 128–129, K141, K150, and 168–171; these read DGEQYK, GVVGD, TT, and CLNT. Zn(2+)-binding residues include E183, H246, and H263.

The protein belongs to the sugar phosphate cyclases superfamily. Dehydroquinate synthase family. Co(2+) is required as a cofactor. Requires Zn(2+) as cofactor. NAD(+) serves as cofactor.

It localises to the cytoplasm. The enzyme catalyses 7-phospho-2-dehydro-3-deoxy-D-arabino-heptonate = 3-dehydroquinate + phosphate. It participates in metabolic intermediate biosynthesis; chorismate biosynthesis; chorismate from D-erythrose 4-phosphate and phosphoenolpyruvate: step 2/7. Catalyzes the conversion of 3-deoxy-D-arabino-heptulosonate 7-phosphate (DAHP) to dehydroquinate (DHQ). This Shewanella sediminis (strain HAW-EB3) protein is 3-dehydroquinate synthase.